Reading from the N-terminus, the 571-residue chain is Hemagglutinin-neuraminidase (571 aa).

The Intravirion segment spans residues 1–26 (MDRAVSRVVLENEEREAKNTWRFVFR). Residues 27-47 (IAVLLLIVMTLAISAAALVYS) form a helical membrane-spanning segment. Over 48–571 (MGASTPRDLA…LVEILKDDRV (524 aa)) the chain is Virion surface. A glycan (N-linked (GlcNAc...) asparagine; by host) is linked at asparagine 119. The important for interaction with fusion/F protein stretch occupies residues 124-152 (GAPVHDPDYIGGIGKELIVDDTSDVTSFY). Cystine bridges form between cysteine 172/cysteine 196, cysteine 186/cysteine 247, and cysteine 238/cysteine 251. Residues 234–239 (NRKSCS) are involved in neuraminidase activity. Asparagine 341 is a glycosylation site (N-linked (GlcNAc...) asparagine; by host). An intrachain disulfide couples cysteine 455 to cysteine 465. N-linked (GlcNAc...) asparagine; by host glycans are attached at residues asparagine 481 and asparagine 508. A disulfide bridge links cysteine 531 with cysteine 542.

The protein belongs to the paramyxoviruses hemagglutinin-neuraminidase family. As to quaternary structure, homotetramer; composed of disulfide-linked homodimers. Interacts with F protein trimer. Interacts with host CG-1B; this interaction inhibits viral adsorption and replication rather than internalization.

It localises to the virion membrane. The protein resides in the host cell membrane. The enzyme catalyses Hydrolysis of alpha-(2-&gt;3)-, alpha-(2-&gt;6)-, alpha-(2-&gt;8)- glycosidic linkages of terminal sialic acid residues in oligosaccharides, glycoproteins, glycolipids, colominic acid and synthetic substrates.. Functionally, mediates the viral entry into the host cell together with fusion/F protein. Attaches the virus to sialic acid-containing cell receptors and thereby initiates infection. Binding of HN protein to the receptor induces a conformational change that allows the F protein to trigger virion/cell membranes fusion. Neuraminidase activity ensures the efficient spread of the virus by dissociating the mature virions from the neuraminic acid containing glycoproteins. This Newcastle disease virus (strain Iba/85) (NDV) protein is Hemagglutinin-neuraminidase (HN).